A 547-amino-acid chain; its full sequence is Glucose-6-phosphate isomerase (547 aa).

The active-site Proton donor is the Glu354. Residues His385 and Lys513 contribute to the active site.

Belongs to the GPI family.

The protein resides in the cytoplasm. It catalyses the reaction alpha-D-glucose 6-phosphate = beta-D-fructose 6-phosphate. The protein operates within carbohydrate biosynthesis; gluconeogenesis. It functions in the pathway carbohydrate degradation; glycolysis; D-glyceraldehyde 3-phosphate and glycerone phosphate from D-glucose: step 2/4. Its function is as follows. Catalyzes the reversible isomerization of glucose-6-phosphate to fructose-6-phosphate. The protein is Glucose-6-phosphate isomerase of Erwinia tasmaniensis (strain DSM 17950 / CFBP 7177 / CIP 109463 / NCPPB 4357 / Et1/99).